A 980-amino-acid chain; its full sequence is Valine--tRNA ligase (980 aa).

The interval 1–40 (MADKGCEAAQSKDSSAPGSGEPRPKTEKELERERQKAAKL) is disordered. The span at 22 to 40 (PRPKTEKELERERQKAAKL) shows a compositional bias: basic and acidic residues. Residues 139-149 (PNVTGALHIGH) carry the 'HIGH' region motif. The 'KMSKS' region motif lies at 652–656 (KMSKS). Lysine 655 serves as a coordination point for ATP.

It belongs to the class-I aminoacyl-tRNA synthetase family.

It is found in the cytoplasm. The catalysed reaction is tRNA(Val) + L-valine + ATP = L-valyl-tRNA(Val) + AMP + diphosphate. This Schizosaccharomyces pombe (strain 972 / ATCC 24843) (Fission yeast) protein is Valine--tRNA ligase (vas2).